Consider the following 433-residue polypeptide: Monodehydroascorbate reductase (433 aa).

FAD contacts are provided by residues 13 to 16, Glu-40, Arg-47, Lys-52, Ile-95, and 146 to 147; these read GGVS and RE. NAD(+)-binding positions include 171 to 177, Glu-195, Arg-201, and Gly-260; that span reads GGYIGLE. 173-177 contacts NADP(+); that stretch reads YIGLE. Residues Arg-201 and Gly-260 each coordinate NADP(+). Position 297 (Asp-297) interacts with FAD. 313–314 contributes to the NAD(+) binding site; that stretch reads EH. 313 to 314 provides a ligand contact to NADP(+); it reads EH. Residue Val-315 participates in FAD binding. L-ascorbate is bound at residue Arg-319. Tyr-348 lines the FAD pocket. Tyr-348 provides a ligand contact to NAD(+). Residue Tyr-348 coordinates NADP(+). Arg-350 lines the L-ascorbate pocket.

This sequence belongs to the FAD-dependent oxidoreductase family. Requires FAD as cofactor. As to expression, expressed in leaves, and to a lesser degree in stems, roots and all stages of fruit.

The protein resides in the cytoplasm. It catalyses the reaction 2 monodehydro-L-ascorbate radical + NADH + H(+) = 2 L-ascorbate + NAD(+). Its function is as follows. Catalyzes the conversion of monodehydroascorbate to ascorbate, oxidizing NADH in the process. The sequence is that of Monodehydroascorbate reductase from Solanum lycopersicum (Tomato).